Here is a 210-residue protein sequence, read N- to C-terminus: Uracil phosphoribosyltransferase (210 aa).

5-phospho-alpha-D-ribose 1-diphosphate contacts are provided by residues R78, R103, and 130 to 138 (DPMLATGGT). Residues I193 and 198-200 (GDA) contribute to the uracil site. Residue D199 coordinates 5-phospho-alpha-D-ribose 1-diphosphate.

This sequence belongs to the UPRTase family. Mg(2+) is required as a cofactor.

The enzyme catalyses UMP + diphosphate = 5-phospho-alpha-D-ribose 1-diphosphate + uracil. It participates in pyrimidine metabolism; UMP biosynthesis via salvage pathway; UMP from uracil: step 1/1. Its activity is regulated as follows. Allosterically activated by GTP. Its function is as follows. Catalyzes the conversion of uracil and 5-phospho-alpha-D-ribose 1-diphosphate (PRPP) to UMP and diphosphate. The protein is Uracil phosphoribosyltransferase of Stenotrophomonas maltophilia (strain R551-3).